The following is a 536-amino-acid chain: Nuclear hormone receptor family member nhr-7 (536 aa).

A DNA-binding region (nuclear receptor) is located at residues 6 to 82; sequence NRICAVCGDT…VGMNPDYVRP (77 aa). 2 consecutive NR C4-type zinc fingers follow at residues 9-29 and 46-70; these read CAVCGDTPAKIHYGVLACFGC and CRFEKNCEVTKFERNACRYCRFRKC. Positions 155–378 constitute an NR LBD domain; it reads ADRSLARKTG…PFHKILTDII (224 aa). Residues 427–465 are disordered; it reads SPCQISAPPPPQQQYTDYSQMPSTSSYPANSSPFQSPYR. Residues 439–465 are compositionally biased toward polar residues; the sequence is QQYTDYSQMPSTSSYPANSSPFQSPYR.

It belongs to the nuclear hormone receptor family.

The protein localises to the nucleus. Its function is as follows. Orphan nuclear receptor. The sequence is that of Nuclear hormone receptor family member nhr-7 (nhr-7) from Caenorhabditis elegans.